The sequence spans 405 residues: Homocitrate synthase AksA (405 aa).

Positions 23–274 (IEICDVTLRD…IERYDTTKLN (252 aa)) constitute a Pyruvate carboxyltransferase domain.

Belongs to the alpha-IPM synthase/homocitrate synthase family.

It catalyses the reaction acetyl-CoA + 2-oxoglutarate + H2O = (2R)-homocitrate + CoA + H(+). It carries out the reaction 2-oxoadipate + acetyl-CoA + H2O = (R)-dihomocitrate + CoA + H(+). The enzyme catalyses 2-oxoheptanedioate + acetyl-CoA + H2O = (R)-trihomocitrate + CoA + H(+). It functions in the pathway organic acid metabolism; 2-oxosuberate biosynthesis. Functionally, catalyzes the condensation of alpha-ketoglutarate and acetyl-CoA to form (R)-homocitrate. Can also catalyze the condensation of alpha-ketoadipate with acetyl-CoA to form (R)-homo(2)citrate, and the condensation of alpha-ketopimelate with acetyl-CoA to form (R)-homo(3)citrate. These reactions are part of the biosynthesis pathway of coenzyme B and biotin. The sequence is that of Homocitrate synthase AksA (aksA) from Methanosarcina mazei (strain ATCC BAA-159 / DSM 3647 / Goe1 / Go1 / JCM 11833 / OCM 88) (Methanosarcina frisia).